A 244-amino-acid polypeptide reads, in one-letter code: tRNA pseudouridine synthase A (244 aa).

Residue aspartate 52 is the Nucleophile of the active site. Substrate is bound at residue tyrosine 110.

Belongs to the tRNA pseudouridine synthase TruA family. As to quaternary structure, homodimer.

The enzyme catalyses uridine(38/39/40) in tRNA = pseudouridine(38/39/40) in tRNA. Functionally, formation of pseudouridine at positions 38, 39 and 40 in the anticodon stem and loop of transfer RNAs. This is tRNA pseudouridine synthase A from Finegoldia magna (strain ATCC 29328 / DSM 20472 / WAL 2508) (Peptostreptococcus magnus).